The chain runs to 329 residues: DNA-directed RNA polymerase subunit alpha (329 aa).

The tract at residues Met-1–Arg-234 is alpha N-terminal domain (alpha-NTD). The tract at residues Phe-248 to Leu-329 is alpha C-terminal domain (alpha-CTD).

It belongs to the RNA polymerase alpha chain family. In terms of assembly, homodimer. The RNAP catalytic core consists of 2 alpha, 1 beta, 1 beta' and 1 omega subunit. When a sigma factor is associated with the core the holoenzyme is formed, which can initiate transcription.

The enzyme catalyses RNA(n) + a ribonucleoside 5'-triphosphate = RNA(n+1) + diphosphate. DNA-dependent RNA polymerase catalyzes the transcription of DNA into RNA using the four ribonucleoside triphosphates as substrates. This Shewanella denitrificans (strain OS217 / ATCC BAA-1090 / DSM 15013) protein is DNA-directed RNA polymerase subunit alpha.